A 388-amino-acid polypeptide reads, in one-letter code: NADH-quinone oxidoreductase subunit D 2 (388 aa).

This sequence belongs to the complex I 49 kDa subunit family. NDH-1 is composed of 14 different subunits. Subunits NuoB, C, D, E, F, and G constitute the peripheral sector of the complex.

The protein localises to the cell membrane. The enzyme catalyses a quinone + NADH + 5 H(+)(in) = a quinol + NAD(+) + 4 H(+)(out). In terms of biological role, NDH-1 shuttles electrons from NADH, via FMN and iron-sulfur (Fe-S) centers, to quinones in the respiratory chain. The immediate electron acceptor for the enzyme in this species is believed to be a menaquinone. Couples the redox reaction to proton translocation (for every two electrons transferred, four hydrogen ions are translocated across the cytoplasmic membrane), and thus conserves the redox energy in a proton gradient. The chain is NADH-quinone oxidoreductase subunit D 2 from Salinispora tropica (strain ATCC BAA-916 / DSM 44818 / JCM 13857 / NBRC 105044 / CNB-440).